The chain runs to 234 residues: Large ribosomal subunit protein uL1 (234 aa).

It belongs to the universal ribosomal protein uL1 family. In terms of assembly, part of the 50S ribosomal subunit.

Binds directly to 23S rRNA. The L1 stalk is quite mobile in the ribosome, and is involved in E site tRNA release. Functionally, protein L1 is also a translational repressor protein, it controls the translation of the L11 operon by binding to its mRNA. In terms of biological role, peptides originating from the N-terminal end of L1 have antibacterial activity against bacteria such as E.coli and B.megaterium and modest antifungal activities. Has no effect on H.pylori itself. Peptides are not hemolytic against mammalian cells. These peptides may be released in the stomach during altruistic lysis to kill other fast growing bacteria. In Helicobacter pylori (strain ATCC 700392 / 26695) (Campylobacter pylori), this protein is Large ribosomal subunit protein uL1.